The sequence spans 455 residues: MMTKAPATAVYDTLSLLFDFPNQEQRLWWHSIAPMFAAMLDTAGHNVHDQYRHLGIFKKHIIPFLGVYPAQGKHTWPSVLTRYGIPFELSLNCLDSVVRYTFEPTTEHTGTGDDSYNAFAILECIQKLVRIQPGIDMEWFSYFRNELVLNATESARLGRNDSVNQQPIRTQNKLALDLKGDRFALKVYLYPHLKSIATGVSSHDLIFNSVRKLSQKHTSIQPSFNVLCDYVASRNDPDSNAAEAEAGVPASALRARLLSCDLVDPSKSRIKIYLLEQTVSLTAMEDLWTLGGRRTDSSTLNGLDMMRELWHLLQIPSGFMKYPESDLKLGEVPDEQLPSMVHYALHPDQPMPEPQVYFTVFGMSDAGITNALATFFSRHGWYEMAKKYRVFLEGSFPNHDFESLNYLHTYVSFSYRKNKPYLSVYLHSFETGQWPAFSDDPTAFNAFKRCDLSLT.

L-tryptophan is bound by residues 79–80 (VL) and Glu88. Arg99, Lys186, and Tyr188 together coordinate substrate. The L-tryptophan site is built by Tyr190 and Arg256. Arg269, Lys271, Tyr273, Gln355, Tyr357, Tyr421, and Tyr425 together coordinate substrate.

This sequence belongs to the tryptophan dimethylallyltransferase family. As to quaternary structure, homodimer.

The catalysed reaction is L-tryptophan + dimethylallyl diphosphate = 4-(3-methylbut-2-enyl)-L-tryptophan + diphosphate. It participates in alkaloid biosynthesis; ergot alkaloid biosynthesis. Its function is as follows. Tryptophan dimethylallyltransferase; part of the gene cluster that mediates the biosynthesis of fungal ergot alkaloid. DmaW catalyzes the first step of ergot alkaloid biosynthesis by condensing dimethylallyl diphosphate (DMAP) and tryptophan to form 4-dimethylallyl-L-tryptophan. The second step is catalyzed by the methyltransferase easF that methylates 4-dimethylallyl-L-tryptophan in the presence of S-adenosyl-L-methionine, resulting in the formation of 4-dimethylallyl-L-abrine. The catalase easC and the FAD-dependent oxidoreductase easE then transform 4-dimethylallyl-L-abrine to chanoclavine-I which is further oxidized by easD in the presence of NAD(+), resulting in the formation of chanoclavine-I aldehyde. Agroclavine dehydrogenase easG then mediates the conversion of chanoclavine-I aldehyde to agroclavine via a non-enzymatic adduct reaction: the substrate is an iminium intermediate that is formed spontaneously from chanoclavine-I aldehyde in the presence of glutathione. Further conversion of agroclavine to paspalic acid is a two-step process involving oxidation of agroclavine to elymoclavine and of elymoclavine to paspalic acid, the second step being performed by the elymoclavine oxidase cloA. However, cloA does not encode a functional enzyme indicating that C.fusiformis terminates its ergot alkaloid pathway at elymoclavine. This Claviceps fusiformis (Ergot fungus) protein is Tryptophan dimethylallyltransferase.